A 217-amino-acid polypeptide reads, in one-letter code: ATP phosphoribosyltransferase (217 aa).

The protein belongs to the ATP phosphoribosyltransferase family. Short subfamily. In terms of assembly, heteromultimer composed of HisG and HisZ subunits.

The protein localises to the cytoplasm. It catalyses the reaction 1-(5-phospho-beta-D-ribosyl)-ATP + diphosphate = 5-phospho-alpha-D-ribose 1-diphosphate + ATP. It functions in the pathway amino-acid biosynthesis; L-histidine biosynthesis; L-histidine from 5-phospho-alpha-D-ribose 1-diphosphate: step 1/9. Functionally, catalyzes the condensation of ATP and 5-phosphoribose 1-diphosphate to form N'-(5'-phosphoribosyl)-ATP (PR-ATP). Has a crucial role in the pathway because the rate of histidine biosynthesis seems to be controlled primarily by regulation of HisG enzymatic activity. The sequence is that of ATP phosphoribosyltransferase (hisG) from Neisseria meningitidis serogroup A / serotype 4A (strain DSM 15465 / Z2491).